Reading from the N-terminus, the 155-residue chain is 3-dehydroquinate dehydratase (155 aa).

The Proton acceptor role is filled by Tyr22. Residues Asn73, His79, and Asp86 each coordinate substrate. His99 functions as the Proton donor in the catalytic mechanism. Substrate contacts are provided by residues 100-101 (IS) and Arg110.

This sequence belongs to the type-II 3-dehydroquinase family. In terms of assembly, homododecamer.

The enzyme catalyses 3-dehydroquinate = 3-dehydroshikimate + H2O. Its pathway is metabolic intermediate biosynthesis; chorismate biosynthesis; chorismate from D-erythrose 4-phosphate and phosphoenolpyruvate: step 3/7. In terms of biological role, catalyzes a trans-dehydration via an enolate intermediate. This is 3-dehydroquinate dehydratase from Campylobacter hominis (strain ATCC BAA-381 / DSM 21671 / CCUG 45161 / LMG 19568 / NCTC 13146 / CH001A).